A 209-amino-acid polypeptide reads, in one-letter code: uncharacterized protein (209 aa).

Active-site charge relay system residues include Ser119 and His160.

It belongs to the peptidase S51 family.

This is an uncharacterized protein from Listeria innocua serovar 6a (strain ATCC BAA-680 / CLIP 11262).